The chain runs to 441 residues: MTAPKKLFIKTYGCQMNVYDSERMSEALVAEGYVETKTAEDADMILLNTCHIREKAAEKVYSELGRLKSLKADNPDLKLGVAGCVAQAEGEEIMRRQPAVDLVVGPQSYHRLPQMEARLREGHKALDTDFPPEDKFEELKARPKARRAPSAFLTVQEGCDKFCAFCVVPYTRGAEVSRPVTRVLDEARDLVERGVREITLLGQNVNAYHGAGADGNEKTLAQLIWALNDIDGLERIRFTTSHPNDMQDDLIEAHRDCPKLMPYLHLPVQSGSDRILKRMNRKHTADSYLRLIERIRVGRPDILLSGDFIVGFPEETEADFQATLDLIEAVNYGYAYSFKYSTRPGTPAAERAQVDPVEADERLQRIQALITRQQQDIQQSMVGRDVSVLIEKPGRFEGQMVGKSEYLHAVHVDQCSAQIGDILPVRIVEAKRNSLAAVTLA.

An MTTase N-terminal domain is found at Lys-5–Glu-121. Residues Cys-14, Cys-50, Cys-84, Cys-159, Cys-163, and Cys-166 each contribute to the [4Fe-4S] cluster site. The 236-residue stretch at Ala-145–Ser-380 folds into the Radical SAM core domain. Residues Gln-379–Ala-441 enclose the TRAM domain.

This sequence belongs to the methylthiotransferase family. MiaB subfamily. In terms of assembly, monomer. It depends on [4Fe-4S] cluster as a cofactor.

The protein localises to the cytoplasm. The catalysed reaction is N(6)-dimethylallyladenosine(37) in tRNA + (sulfur carrier)-SH + AH2 + 2 S-adenosyl-L-methionine = 2-methylsulfanyl-N(6)-dimethylallyladenosine(37) in tRNA + (sulfur carrier)-H + 5'-deoxyadenosine + L-methionine + A + S-adenosyl-L-homocysteine + 2 H(+). Functionally, catalyzes the methylthiolation of N6-(dimethylallyl)adenosine (i(6)A), leading to the formation of 2-methylthio-N6-(dimethylallyl)adenosine (ms(2)i(6)A) at position 37 in tRNAs that read codons beginning with uridine. The protein is tRNA-2-methylthio-N(6)-dimethylallyladenosine synthase of Roseobacter denitrificans (strain ATCC 33942 / OCh 114) (Erythrobacter sp. (strain OCh 114)).